Reading from the N-terminus, the 82-residue chain is Small ribosomal subunit protein bS18 (82 aa).

The interval 1-20 (MSEASSAPVRRPFHRRRKTC) is disordered.

Belongs to the bacterial ribosomal protein bS18 family. In terms of assembly, part of the 30S ribosomal subunit. Forms a tight heterodimer with protein bS6.

In terms of biological role, binds as a heterodimer with protein bS6 to the central domain of the 16S rRNA, where it helps stabilize the platform of the 30S subunit. This is Small ribosomal subunit protein bS18 from Rhizobium etli (strain CIAT 652).